The primary structure comprises 461 residues: Fumarate hydratase class II (461 aa).

Substrate contacts are provided by residues 98–100, 129–132, 139–141, and Thr187; these read SGT, HPND, and SSN. Positions 120–140 are disordered; it reads SKKGGKSPVHPNDHVNKGQSS. Catalysis depends on His188, which acts as the Proton donor/acceptor. Ser318 is a catalytic residue. Residues Ser319 and 324 to 326 contribute to the substrate site; that span reads KVN.

It belongs to the class-II fumarase/aspartase family. Fumarase subfamily. As to quaternary structure, homotetramer.

The protein localises to the cytoplasm. The catalysed reaction is (S)-malate = fumarate + H2O. It functions in the pathway carbohydrate metabolism; tricarboxylic acid cycle; (S)-malate from fumarate: step 1/1. Its function is as follows. Involved in the TCA cycle. Catalyzes the stereospecific interconversion of fumarate to L-malate. The polypeptide is Fumarate hydratase class II (Rickettsia felis (strain ATCC VR-1525 / URRWXCal2) (Rickettsia azadi)).